The following is a 155-amino-acid chain: 6,7-dimethyl-8-ribityllumazine synthase (155 aa).

5-amino-6-(D-ribitylamino)uracil contacts are provided by residues Trp23, 57–59, and 81–83; these read AWE and CVI. Residue 86 to 87 participates in (2S)-2-hydroxy-3-oxobutyl phosphate binding; the sequence is DT. Catalysis depends on His89, which acts as the Proton donor. Asn114 contributes to the 5-amino-6-(D-ribitylamino)uracil binding site. (2S)-2-hydroxy-3-oxobutyl phosphate is bound at residue Arg128.

This sequence belongs to the DMRL synthase family. As to quaternary structure, forms an icosahedral capsid composed of 60 subunits, arranged as a dodecamer of pentamers.

The catalysed reaction is (2S)-2-hydroxy-3-oxobutyl phosphate + 5-amino-6-(D-ribitylamino)uracil = 6,7-dimethyl-8-(1-D-ribityl)lumazine + phosphate + 2 H2O + H(+). It functions in the pathway cofactor biosynthesis; riboflavin biosynthesis; riboflavin from 2-hydroxy-3-oxobutyl phosphate and 5-amino-6-(D-ribitylamino)uracil: step 1/2. Catalyzes the formation of 6,7-dimethyl-8-ribityllumazine by condensation of 5-amino-6-(D-ribitylamino)uracil with 3,4-dihydroxy-2-butanone 4-phosphate. This is the penultimate step in the biosynthesis of riboflavin. This chain is 6,7-dimethyl-8-ribityllumazine synthase, found in Stenotrophomonas maltophilia (strain K279a).